The primary structure comprises 294 residues: UDP-3-O-acyl-N-acetylglucosamine deacetylase (294 aa).

3 residues coordinate Zn(2+): His-75, His-232, and Asp-236. His-259 acts as the Proton donor in catalysis.

The protein belongs to the LpxC family. Zn(2+) serves as cofactor.

The enzyme catalyses a UDP-3-O-[(3R)-3-hydroxyacyl]-N-acetyl-alpha-D-glucosamine + H2O = a UDP-3-O-[(3R)-3-hydroxyacyl]-alpha-D-glucosamine + acetate. It functions in the pathway glycolipid biosynthesis; lipid IV(A) biosynthesis; lipid IV(A) from (3R)-3-hydroxytetradecanoyl-[acyl-carrier-protein] and UDP-N-acetyl-alpha-D-glucosamine: step 2/6. Its function is as follows. Catalyzes the hydrolysis of UDP-3-O-myristoyl-N-acetylglucosamine to form UDP-3-O-myristoylglucosamine and acetate, the committed step in lipid A biosynthesis. The chain is UDP-3-O-acyl-N-acetylglucosamine deacetylase from Sulfurovum sp. (strain NBC37-1).